The following is a 389-amino-acid chain: MEGELAANWSTEAVNSSAAPPGAEGNCTAGPPRRNEALARVEVAVLCLILFLALSGNACVLLALRTTRHKHSRLFFFMKHLSIADLVVAVFQVLPQLLWDITFRFYGPDLLCRLVKYLQVVGMFASTYLLLLMSLDRCLAICQPLRSLRRRTDRLAVLATWLGCLVASAPQVHIFSLREVADGVFDCWAVFIQPWGPKAYITWITLAVYIVPVIVLAACYGLISFKIWQNLRLKTAAAAAAEAPEGAAAGDGGRMALARVSSVKLISKAKIRTVKMTFIIVLAFIVCWTPFFFVQMWSVWDANAPKEASAFIIVMLLASLNSCCNPWIYMLFTGHLFHELVQRFLCCSASYLKGNRLGETSTSKKSNSSSFVLSHRSSSQRSCSQPSTA.

The interval 1–27 (MEGELAANWSTEAVNSSAAPPGAEGNC) is disordered. The Extracellular portion of the chain corresponds to 1–38 (MEGELAANWSTEAVNSSAAPPGAEGNCTAGPPRRNEAL). Residues N8, N15, and N26 are each glycosylated (N-linked (GlcNAc...) asparagine). Over residues 8–18 (NWSTEAVNSSA) the composition is skewed to polar residues. Residues 39 to 63 (ARVEVAVLCLILFLALSGNACVLLA) traverse the membrane as a helical segment. The Cytoplasmic portion of the chain corresponds to 64 to 74 (LRTTRHKHSRL). The chain crosses the membrane as a helical span at residues 75 to 97 (FFFMKHLSIADLVVAVFQVLPQL). At 98–113 (LWDITFRFYGPDLLCR) the chain is on the extracellular side. C112 and C187 are oxidised to a cystine. Residues 114–135 (LVKYLQVVGMFASTYLLLLMSL) form a helical membrane-spanning segment. Residues 136 to 154 (DRCLAICQPLRSLRRRTDR) are Cytoplasmic-facing. A helical transmembrane segment spans residues 155–175 (LAVLATWLGCLVASAPQVHIF). Residues 176–202 (SLREVADGVFDCWAVFIQPWGPKAYIT) lie on the Extracellular side of the membrane. The chain crosses the membrane as a helical span at residues 203 to 225 (WITLAVYIVPVIVLAACYGLISF). Residues 226-275 (KIWQNLRLKTAAAAAAEAPEGAAAGDGGRMALARVSSVKLISKAKIRTVK) are Cytoplasmic-facing. A helical transmembrane segment spans residues 276 to 294 (MTFIIVLAFIVCWTPFFFV). Residues 295-309 (QMWSVWDANAPKEAS) lie on the Extracellular side of the membrane. Residues 310–332 (AFIIVMLLASLNSCCNPWIYMLF) form a helical membrane-spanning segment. At 333-389 (TGHLFHELVQRFLCCSASYLKGNRLGETSTSKKSNSSSFVLSHRSSSQRSCSQPSTA) the chain is on the cytoplasmic side. Positions 358-389 (GETSTSKKSNSSSFVLSHRSSSQRSCSQPSTA) are disordered. Residues 360–389 (TSTSKKSNSSSFVLSHRSSSQRSCSQPSTA) are compositionally biased toward low complexity. Phosphoserine occurs at positions 366 and 368.

This sequence belongs to the G-protein coupled receptor 1 family. Vasopressin/oxytocin receptor subfamily.

The protein localises to the cell membrane. In terms of biological role, receptor for oxytocin. The activity of this receptor is mediated by G proteins which activate a phosphatidylinositol-calcium second messenger system. The chain is Oxytocin receptor (OXTR) from Macaca mulatta (Rhesus macaque).